We begin with the raw amino-acid sequence, 317 residues long: Terpene synthase 3 (317 aa).

A DDxx(x)D/E motif motif is present at residues 96 to 101 (DDFYFE). An NDxxSxxxD/E motif motif is present at residues 223-231 (NDMVSFERE).

This sequence belongs to the terpene synthase family.

Functionally, terpene synthase that converts its substrate farnesyl diphosphate (FPP) into the sesquiterpene CAS 137235-51-9 as a major product. Is also able to convert FPP into 9-epi-(E)-caryophyllene, alpha-neoclovene, beta-neoclovene, and 3 yet unidentified sesquiterpenes. The polypeptide is Terpene synthase 3 (Dictyostelium purpureum (Slime mold)).